Consider the following 566-residue polypeptide: Probable cytochrome P450 519D1 (566 aa).

The helical transmembrane segment at 1 to 21 (MNVFVLTFFICIIYLLFDLIK) threads the bilayer. Positions 471–491 (FNNNNNNNNNNNNNNSNNKHK) are disordered. A compositionally biased stretch (low complexity) spans 472 to 487 (NNNNNNNNNNNNNNSN). Residue C510 coordinates heme.

The protein belongs to the cytochrome P450 family. It depends on heme as a cofactor.

It localises to the membrane. The chain is Probable cytochrome P450 519D1 (cyp519D1) from Dictyostelium discoideum (Social amoeba).